The sequence spans 732 residues: Coagulation factor XIII A chain (732 aa).

Residues 1 to 26 (MSDTPASTFGGRRAVPPNNSNAAEVD) are disordered. At Ser-2 the chain carries N-acetylserine. Residues 2-38 (SDTPASTFGGRRAVPPNNSNAAEVDLPTEELQGLVPR) constitute a propeptide, activation peptide. Residues Cys-315, His-374, and Asp-397 contribute to the active site. Ca(2+)-binding residues include Asn-437, Asp-439, Glu-486, and Glu-491. Asn-614 is a glycosylation site (N-linked (GlcNAc...) asparagine).

It belongs to the transglutaminase superfamily. Transglutaminase family. In terms of assembly, tetramer of two A chains (F13A1) and two B (F13B) chains. It depends on Ca(2+) as a cofactor. The activation peptide is released by thrombin.

The protein resides in the cytoplasm. The protein localises to the secreted. It catalyses the reaction L-glutaminyl-[protein] + L-lysyl-[protein] = [protein]-L-lysyl-N(6)-5-L-glutamyl-[protein] + NH4(+). In terms of biological role, factor XIII is activated by thrombin and calcium ion to a transglutaminase that catalyzes the formation of gamma-glutamyl-epsilon-lysine cross-links between fibrin chains, thus stabilizing the fibrin clot. Also cross-link alpha-2-plasmin inhibitor, or fibronectin, to the alpha chains of fibrin. The sequence is that of Coagulation factor XIII A chain (F13a1) from Mus musculus (Mouse).